The sequence spans 305 residues: Putative ABC transporter molybdenum-binding protein HVO_B0369 (305 aa).

Residues methionine 1 to alanine 40 constitute a signal peptide (tat-type signal).

Belongs to the bacterial solute-binding protein 1 family. WtpA subfamily. The complex is composed of two ATP-binding proteins, two transmembrane proteins (HVO_B0370) and a solute-binding protein (HVO_B0369). Post-translationally, predicted to be exported by the Tat system. The position of the signal peptide cleavage has not been experimentally proven.

In terms of biological role, part of an ABC transporter complex involved in molybdenum import. This Haloferax volcanii (strain ATCC 29605 / DSM 3757 / JCM 8879 / NBRC 14742 / NCIMB 2012 / VKM B-1768 / DS2) (Halobacterium volcanii) protein is Putative ABC transporter molybdenum-binding protein HVO_B0369.